Here is a 399-residue protein sequence, read N- to C-terminus: Probable 2,3-bisphosphoglycerate-independent phosphoglycerate mutase (399 aa).

The protein belongs to the BPG-independent phosphoglycerate mutase family. A-PGAM subfamily.

It carries out the reaction (2R)-2-phosphoglycerate = (2R)-3-phosphoglycerate. The protein operates within carbohydrate degradation; glycolysis; pyruvate from D-glyceraldehyde 3-phosphate: step 3/5. In terms of biological role, catalyzes the interconversion of 2-phosphoglycerate and 3-phosphoglycerate. This chain is Probable 2,3-bisphosphoglycerate-independent phosphoglycerate mutase, found in Geobacter sulfurreducens (strain ATCC 51573 / DSM 12127 / PCA).